The sequence spans 151 residues: D-ribose pyranase 1 (151 aa).

The Proton donor role is filled by His20. Residues Asp28, His98, and 121-123 (WGN) contribute to the substrate site.

The protein belongs to the RbsD / FucU family. RbsD subfamily. As to quaternary structure, homodecamer.

It is found in the cytoplasm. It carries out the reaction beta-D-ribopyranose = beta-D-ribofuranose. It participates in carbohydrate metabolism; D-ribose degradation; D-ribose 5-phosphate from beta-D-ribopyranose: step 1/2. In terms of biological role, catalyzes the interconversion of beta-pyran and beta-furan forms of D-ribose. The protein is D-ribose pyranase 1 of Streptomyces griseus subsp. griseus (strain JCM 4626 / CBS 651.72 / NBRC 13350 / KCC S-0626 / ISP 5235).